The chain runs to 588 residues: L-fucose isomerase (588 aa).

Catalysis depends on proton acceptor residues Glu335 and Asp359. The Mn(2+) site is built by Glu335, Asp359, and His525.

Belongs to the L-fucose isomerase family. It depends on Mn(2+) as a cofactor.

The protein resides in the cytoplasm. It catalyses the reaction L-fucose = L-fuculose. It functions in the pathway carbohydrate degradation; L-fucose degradation; L-lactaldehyde and glycerone phosphate from L-fucose: step 1/3. In terms of biological role, converts the aldose L-fucose into the corresponding ketose L-fuculose. In Streptococcus pneumoniae (strain Taiwan19F-14), this protein is L-fucose isomerase.